We begin with the raw amino-acid sequence, 255 residues long: Putative F-box protein L126 (255 aa).

Residues 1–46 (MLPEEILFMVFSFLDVKELIACSHACSHACSQWRRICSDKLLWVQK) form the F-box domain.

The protein is Putative F-box protein L126 of Acanthamoeba polyphaga (Amoeba).